The sequence spans 250 residues: Putative inactive flavonol synthase 2 (250 aa).

Residues 171–250 (TEYVMRINNY…EQWKVQECVA (80 aa)) form the Fe2OG dioxygenase domain. Residues His-195 and Asp-197 each coordinate Fe cation.

Belongs to the iron/ascorbate-dependent oxidoreductase family.

In Arabidopsis thaliana (Mouse-ear cress), this protein is Putative inactive flavonol synthase 2 (FLS2).